A 317-amino-acid polypeptide reads, in one-letter code: Mitochondrial outer membrane protein porin 4 (317 aa).

The segment at 1-30 is disordered; sequence MEAETECKVPGVYSETGIPVEDPAPGLNSD.

Belongs to the eukaryotic mitochondrial porin (TC 1.B.8.1) family.

It is found in the mitochondrion outer membrane. Its function is as follows. Forms a channel through the mitochondrial outer membrane that allows diffusion of small hydrophilic molecules. The channel adopts an open conformation at low or zero membrane potential and a closed conformation at potentials above 30-40 mV. The open state has a weak anion selectivity whereas the closed state is cation-selective. This is Mitochondrial outer membrane protein porin 4 (VDAC4) from Oryza sativa subsp. japonica (Rice).